We begin with the raw amino-acid sequence, 310 residues long: HPr kinase/phosphorylase (310 aa).

Catalysis depends on residues His-138 and Lys-159. 153–160 (GGSGVGKS) provides a ligand contact to ATP. Residue Ser-160 participates in Mg(2+) binding. Catalysis depends on Asp-177, which acts as the Proton acceptor; for phosphorylation activity. Proton donor; for dephosphorylation activity. The segment at 201–210 (LEIRGLGIIN) is important for the catalytic mechanism of both phosphorylation and dephosphorylation. Residue Glu-202 coordinates Mg(2+). Arg-243 is an active-site residue. The interval 264-269 (PVRPGR) is important for the catalytic mechanism of dephosphorylation.

This sequence belongs to the HPrK/P family. As to quaternary structure, homohexamer. Requires Mg(2+) as cofactor.

It catalyses the reaction [HPr protein]-L-serine + ATP = [HPr protein]-O-phospho-L-serine + ADP + H(+). It carries out the reaction [HPr protein]-O-phospho-L-serine + phosphate + H(+) = [HPr protein]-L-serine + diphosphate. Functionally, catalyzes the ATP- as well as the pyrophosphate-dependent phosphorylation of a specific serine residue in HPr, a phosphocarrier protein of the phosphoenolpyruvate-dependent sugar phosphotransferase system (PTS). HprK/P also catalyzes the pyrophosphate-producing, inorganic phosphate-dependent dephosphorylation (phosphorolysis) of seryl-phosphorylated HPr (P-Ser-HPr). The two antagonistic activities of HprK/P are regulated by several intracellular metabolites, which change their concentration in response to the absence or presence of rapidly metabolisable carbon sources (glucose, fructose, etc.) in the growth medium. Also phosphorylates/dephosphorylates the HPr-like catabolite repression protein crh on a specific serine residue. Therefore, by controlling the phosphorylation state of HPr and crh, HPrK/P is a sensor enzyme that plays a major role in the regulation of carbon metabolism and sugar transport: it mediates carbon catabolite repression (CCR), and regulates PTS-catalyzed carbohydrate uptake and inducer exclusion. The chain is HPr kinase/phosphorylase from Shouchella clausii (strain KSM-K16) (Alkalihalobacillus clausii).